The chain runs to 170 residues: Adenine phosphoribosyltransferase (170 aa).

Belongs to the purine/pyrimidine phosphoribosyltransferase family. In terms of assembly, homodimer.

Its subcellular location is the cytoplasm. It catalyses the reaction AMP + diphosphate = 5-phospho-alpha-D-ribose 1-diphosphate + adenine. Its pathway is purine metabolism; AMP biosynthesis via salvage pathway; AMP from adenine: step 1/1. In terms of biological role, catalyzes a salvage reaction resulting in the formation of AMP, that is energically less costly than de novo synthesis. This chain is Adenine phosphoribosyltransferase, found in Mycoplasmopsis agalactiae (strain NCTC 10123 / CIP 59.7 / PG2) (Mycoplasma agalactiae).